A 429-amino-acid polypeptide reads, in one-letter code: 3-phosphoshikimate 1-carboxyvinyltransferase (429 aa).

3-phosphoshikimate contacts are provided by Lys-23, Ser-24, and Arg-28. Lys-23 contacts phosphoenolpyruvate. The phosphoenolpyruvate site is built by Gly-95 and Arg-123. Residues Ser-168, Gln-170, Asp-316, and Lys-343 each coordinate 3-phosphoshikimate. Gln-170 is a binding site for phosphoenolpyruvate. The active-site Proton acceptor is the Asp-316. The phosphoenolpyruvate site is built by Arg-347 and Arg-389.

The protein belongs to the EPSP synthase family. In terms of assembly, monomer.

It is found in the cytoplasm. The enzyme catalyses 3-phosphoshikimate + phosphoenolpyruvate = 5-O-(1-carboxyvinyl)-3-phosphoshikimate + phosphate. It participates in metabolic intermediate biosynthesis; chorismate biosynthesis; chorismate from D-erythrose 4-phosphate and phosphoenolpyruvate: step 6/7. Catalyzes the transfer of the enolpyruvyl moiety of phosphoenolpyruvate (PEP) to the 5-hydroxyl of shikimate-3-phosphate (S3P) to produce enolpyruvyl shikimate-3-phosphate and inorganic phosphate. The protein is 3-phosphoshikimate 1-carboxyvinyltransferase of Bacillus cereus (strain G9842).